The sequence spans 265 residues: 3-methyl-2-oxobutanoate hydroxymethyltransferase (265 aa).

Mg(2+) is bound by residues Asp45 and Asp84. 3-methyl-2-oxobutanoate-binding positions include 45–46, Asp84, and Lys112; that span reads DS. Glu114 provides a ligand contact to Mg(2+). Glu181 functions as the Proton acceptor in the catalytic mechanism.

The protein belongs to the PanB family. Homodecamer; pentamer of dimers. The cofactor is Mg(2+).

The protein resides in the cytoplasm. The enzyme catalyses 3-methyl-2-oxobutanoate + (6R)-5,10-methylene-5,6,7,8-tetrahydrofolate + H2O = 2-dehydropantoate + (6S)-5,6,7,8-tetrahydrofolate. It functions in the pathway cofactor biosynthesis; (R)-pantothenate biosynthesis; (R)-pantoate from 3-methyl-2-oxobutanoate: step 1/2. Catalyzes the reversible reaction in which hydroxymethyl group from 5,10-methylenetetrahydrofolate is transferred onto alpha-ketoisovalerate to form ketopantoate. This Wigglesworthia glossinidia brevipalpis protein is 3-methyl-2-oxobutanoate hydroxymethyltransferase.